The primary structure comprises 369 residues: Glutamine synthetase 2 cytoplasmic (369 aa).

The GS beta-grasp domain occupies 32 to 112; the sequence is VQATYVWIDG…VMCDTYKFDG (81 aa). The region spanning 119–369 is the GS catalytic domain; that stretch reads KRKTCLEVAN…AILRTICLDE (251 aa).

Belongs to the glutamine synthetase family. As to quaternary structure, homooctamer.

It localises to the cytoplasm. The enzyme catalyses L-glutamate + NH4(+) + ATP = L-glutamine + ADP + phosphate + H(+). This Drosophila melanogaster (Fruit fly) protein is Glutamine synthetase 2 cytoplasmic (Gs2).